Consider the following 734-residue polypeptide: Sulfate transporter (734 aa).

Residues 1–18 show a composition bias toward basic and acidic residues; that stretch reads MSLKNEDQNDLSPKDSVK. The interval 1–38 is disordered; that stretch reads MSLKNEDQNDLSPKDSVKGNDQYRAPSGIHLEPEEESR. Phosphoserine occurs at positions 12 and 16. The next 2 membrane-spanning stretches (helical) occupy residues 113–133 and 138–158; these read VMSG…YSLL and PIYG…LGTS. N-linked (GlcNAc...) asparagine glycosylation is present at asparagine 194. The next 6 membrane-spanning stretches (helical) occupy residues 214 to 234, 237 to 257, 379 to 399, 415 to 435, 453 to 473, and 519 to 539; these read IIVG…MGFF, GFVS…GASF, VDAI…SEMF, AIGF…SAAL, VMTA…FFSL, and LIST…CVIL. The STAS domain maps to 563 to 714; it reads AYKNLQAKSG…YSIYEAMTFA (152 aa).

It belongs to the SLC26A/SulP transporter (TC 2.A.53) family. Post-translationally, N-glycosylated.

The protein resides in the cell membrane. Its subcellular location is the apical cell membrane. The catalysed reaction is oxalate(in) + sulfate(out) = oxalate(out) + sulfate(in). The enzyme catalyses sulfate(out) + 2 chloride(in) = sulfate(in) + 2 chloride(out). It carries out the reaction oxalate(out) + 2 chloride(in) = oxalate(in) + 2 chloride(out). It catalyses the reaction bromide(in) + chloride(out) = bromide(out) + chloride(in). The catalysed reaction is nitrate(in) + chloride(out) = nitrate(out) + chloride(in). The enzyme catalyses iodide(in) + chloride(out) = iodide(out) + chloride(in). Functionally, sulfate transporter which mediates sulfate uptake into chondrocytes in order to maintain adequate sulfation of proteoglycans which is needed for cartilage development. Mediates electroneutral anion exchange of sulfate ions for oxalate ions, sulfate and oxalate ions for chloride and/or hydroxyl ions and chloride ions for bromide, iodide and nitrate ions. The coupling of sulfate transport to both hydroxyl and chloride ions likely serves to ensure transport at both acidic pH when most sulfate uptake is mediated by sulfate-hydroxide exchange and alkaline pH when most sulfate uptake is mediated by sulfate-chloride exchange. Essential for chondrocyte proliferation, differentiation and cell size expansion. The protein is Sulfate transporter (SLC26A2) of Bos taurus (Bovine).